Consider the following 499-residue polypeptide: Cysteine--tRNA ligase (499 aa).

C29 is a binding site for Zn(2+). The 'HIGH' region motif lies at 31–41; that stretch reads VTVYDLCHLGH. Zn(2+) is bound by residues C213, H238, and E242. The short motif at 270-274 is the 'KMSKS' region element; that stretch reads KMSKS. An ATP-binding site is contributed by K273.

It belongs to the class-I aminoacyl-tRNA synthetase family. Monomer. Zn(2+) is required as a cofactor.

Its subcellular location is the cytoplasm. The enzyme catalyses tRNA(Cys) + L-cysteine + ATP = L-cysteinyl-tRNA(Cys) + AMP + diphosphate. In Synechococcus sp. (strain CC9902), this protein is Cysteine--tRNA ligase.